The following is a 591-amino-acid chain: Aspartate--tRNA ligase (591 aa).

Position 173 (Glu-173) interacts with L-aspartate. Residues 197 to 200 (QLFK) form an aspartate region. Arg-219 provides a ligand contact to L-aspartate. ATP is bound by residues 219 to 221 (RDE) and Gln-228. Position 448 (His-448) interacts with L-aspartate. An ATP-binding site is contributed by Glu-482. Arg-489 contacts L-aspartate. Position 534–537 (534–537 (GLDR)) interacts with ATP.

This sequence belongs to the class-II aminoacyl-tRNA synthetase family. Type 1 subfamily. As to quaternary structure, homodimer.

It is found in the cytoplasm. It carries out the reaction tRNA(Asp) + L-aspartate + ATP = L-aspartyl-tRNA(Asp) + AMP + diphosphate. Catalyzes the attachment of L-aspartate to tRNA(Asp) in a two-step reaction: L-aspartate is first activated by ATP to form Asp-AMP and then transferred to the acceptor end of tRNA(Asp). The polypeptide is Aspartate--tRNA ligase (Shewanella sp. (strain MR-7)).